The primary structure comprises 154 residues: Lipoprotein signal peptidase (154 aa).

A run of 2 helical transmembrane segments spans residues 55-75 (GHMW…IYIM) and 84-104 (LFSI…IDRV). Active-site residues include Asp-111 and Asp-129. A helical transmembrane segment spans residues 124 to 144 (IFNVADASLSVGVVLMLVYVF).

This sequence belongs to the peptidase A8 family.

It is found in the cell membrane. It carries out the reaction Release of signal peptides from bacterial membrane prolipoproteins. Hydrolyzes -Xaa-Yaa-Zaa-|-(S,diacylglyceryl)Cys-, in which Xaa is hydrophobic (preferably Leu), and Yaa (Ala or Ser) and Zaa (Gly or Ala) have small, neutral side chains.. Its pathway is protein modification; lipoprotein biosynthesis (signal peptide cleavage). This protein specifically catalyzes the removal of signal peptides from prolipoproteins. The sequence is that of Lipoprotein signal peptidase from Listeria monocytogenes serovar 1/2a (strain ATCC BAA-679 / EGD-e).